A 185-amino-acid chain; its full sequence is NADH-quinone oxidoreductase subunit B (185 aa).

Residues C37, C38, C103, and C132 each contribute to the [4Fe-4S] cluster site.

Belongs to the complex I 20 kDa subunit family. NDH-1 is composed of 14 different subunits. Subunits NuoB, C, D, E, F, and G constitute the peripheral sector of the complex. [4Fe-4S] cluster serves as cofactor.

The protein localises to the cell membrane. It catalyses the reaction a quinone + NADH + 5 H(+)(in) = a quinol + NAD(+) + 4 H(+)(out). In terms of biological role, NDH-1 shuttles electrons from NADH, via FMN and iron-sulfur (Fe-S) centers, to quinones in the respiratory chain. The immediate electron acceptor for the enzyme in this species is believed to be a menaquinone. Couples the redox reaction to proton translocation (for every two electrons transferred, four hydrogen ions are translocated across the cytoplasmic membrane), and thus conserves the redox energy in a proton gradient. The sequence is that of NADH-quinone oxidoreductase subunit B from Thermobifida fusca (strain YX).